A 194-amino-acid polypeptide reads, in one-letter code: Holliday junction branch migration complex subunit RuvA (194 aa).

Positions 1–63 (MFEYLYGTVE…EDTYKLIGFL (63 aa)) are domain I. The domain II stretch occupies residues 64-142 (DERDRKIFEL…NLTYTEEETV (79 aa)). A flexible linker region spans residues 143–147 (SMDML). Residues 147–194 (LEDLVLALEGLGYNKKEIDKTLEKIDLNKFSSLEDAIKGILKNMRIGD) are domain III.

This sequence belongs to the RuvA family. In terms of assembly, homotetramer. Forms an RuvA(8)-RuvB(12)-Holliday junction (HJ) complex. HJ DNA is sandwiched between 2 RuvA tetramers; dsDNA enters through RuvA and exits via RuvB. An RuvB hexamer assembles on each DNA strand where it exits the tetramer. Each RuvB hexamer is contacted by two RuvA subunits (via domain III) on 2 adjacent RuvB subunits; this complex drives branch migration. In the full resolvosome a probable DNA-RuvA(4)-RuvB(12)-RuvC(2) complex forms which resolves the HJ.

The protein localises to the cytoplasm. The RuvA-RuvB-RuvC complex processes Holliday junction (HJ) DNA during genetic recombination and DNA repair, while the RuvA-RuvB complex plays an important role in the rescue of blocked DNA replication forks via replication fork reversal (RFR). RuvA specifically binds to HJ cruciform DNA, conferring on it an open structure. The RuvB hexamer acts as an ATP-dependent pump, pulling dsDNA into and through the RuvAB complex. HJ branch migration allows RuvC to scan DNA until it finds its consensus sequence, where it cleaves and resolves the cruciform DNA. The sequence is that of Holliday junction branch migration complex subunit RuvA from Fusobacterium nucleatum subsp. nucleatum (strain ATCC 25586 / DSM 15643 / BCRC 10681 / CIP 101130 / JCM 8532 / KCTC 2640 / LMG 13131 / VPI 4355).